The following is a 322-amino-acid chain: NADH-quinone oxidoreductase subunit H (322 aa).

8 consecutive transmembrane segments (helical) span residues 12–32 (IGKALIVLVGIVGAGAFMSFI), 79–99 (IFILAPIIAFTAFILAFAVVP), 111–131 (VGLLYILAIAGLAVYAVLFAG), 151–171 (LSYEVFLGLSLMGIVIQTGSF), 183–203 (LWNVVPQFLGFITFLFAGVAV), 234–254 (FFVGEYIGIVLISSLIVTLFF), 262–282 (LPPFFWFALKTACFMVFFILL), and 301–321 (VCLPLTLINMLITAAVVLMNV).

Belongs to the complex I subunit 1 family. NDH-1 is composed of 13 different subunits. Subunits NuoA, H, J, K, L, M, N constitute the membrane sector of the complex.

Its subcellular location is the cell inner membrane. It catalyses the reaction a quinone + NADH + 5 H(+)(in) = a quinol + NAD(+) + 4 H(+)(out). Its function is as follows. NDH-1 shuttles electrons from NADH, via FMN and iron-sulfur (Fe-S) centers, to quinones in the respiratory chain. The immediate electron acceptor for the enzyme in this species is believed to be ubiquinone. Couples the redox reaction to proton translocation (for every two electrons transferred, four hydrogen ions are translocated across the cytoplasmic membrane), and thus conserves the redox energy in a proton gradient. This subunit may bind ubiquinone. This Shewanella oneidensis (strain ATCC 700550 / JCM 31522 / CIP 106686 / LMG 19005 / NCIMB 14063 / MR-1) protein is NADH-quinone oxidoreductase subunit H.